The chain runs to 281 residues: Pantothenate synthetase (281 aa).

Residue 30–37 (MGNLHQGH) coordinates ATP. His-37 (proton donor) is an active-site residue. Gln-61 is a binding site for (R)-pantoate. Gln-61 provides a ligand contact to beta-alanine. Position 149 to 152 (149 to 152 (GNKD)) interacts with ATP. Gln-155 contributes to the (R)-pantoate binding site. ATP is bound by residues Ile-178 and 186–189 (MSSR).

The protein belongs to the pantothenate synthetase family. Homodimer.

It is found in the cytoplasm. The catalysed reaction is (R)-pantoate + beta-alanine + ATP = (R)-pantothenate + AMP + diphosphate + H(+). It participates in cofactor biosynthesis; (R)-pantothenate biosynthesis; (R)-pantothenate from (R)-pantoate and beta-alanine: step 1/1. Its function is as follows. Catalyzes the condensation of pantoate with beta-alanine in an ATP-dependent reaction via a pantoyl-adenylate intermediate. This chain is Pantothenate synthetase, found in Shewanella baltica (strain OS185).